The following is a 27-amino-acid chain: Conotoxin Lo6/7b (27 aa).

Disulfide bonds link C2–C16, C9–C19, and C15–C26. Tyrosine amide is present on Y27.

In terms of tissue distribution, expressed by the venom duct.

The protein resides in the secreted. In terms of biological role, 1 uM of this toxin does not show any effect on voltage-gated sodium and potassium channels. Does not show antibacterial activity on both Gram-negative and Gram-positive bacteria. The protein is Conotoxin Lo6/7b of Conasprella longurionis (Cone snail).